A 664-amino-acid chain; its full sequence is Sodium/glucose cotransporter 1 (664 aa).

The Extracellular portion of the chain corresponds to 1–24 (MDSSTWSPPATATAEPLQAYERIR). The helical transmembrane segment at 25-47 (NAADISVIVIYFVVVMAVGLWAM) threads the bilayer. Residues 48-66 (FSTNRGTVGGFFLAGRSMV) are Cytoplasmic-facing. Residues 67–90 (WWPIGASLFASNIGSGHFVGLAGT) form a helical membrane-spanning segment. The Extracellular portion of the chain corresponds to 91–95 (GAAAG). A helical transmembrane segment spans residues 96 to 117 (IATGGFEWNALILVVLLGWVFV). The Cytoplasmic segment spans residues 118 to 139 (PIYIKAGVVTMPEYLRKRFGGQ). A helical transmembrane segment spans residues 140–169 (RIQVYLSVLSLVLYIFTKISADIFSGAIFI). Residues 170–176 (NLALGLD) are Extracellular-facing. A helical membrane pass occupies residues 177 to 193 (LYLAIFILLAITALYTI). At 194 to 202 (TGGLAAVIY) the chain is on the cytoplasmic side. Residues 203–221 (TDTLQTVIMLLGSFILTGF) traverse the membrane as a helical segment. Residues 222–275 (AFHEVGGYSAFVTKYMNAIPTVTSYGNTTVKKECYTPRADSFHIFRDPLKGDLP) lie on the Extracellular side of the membrane. N248 is a glycosylation site (N-linked (GlcNAc...) asparagine). Cystine bridges form between C255–C511, C255–C610, C345–C351, C355–C361, and C517–C522. A helical membrane pass occupies residues 276–295 (WPGLIFGLTIISLWYWCTDQ). Residues 296-309 (VIVQRCLSAKNMSH) lie on the Cytoplasmic side of the membrane. The chain crosses the membrane as a helical span at residues 310-331 (VKAGCIMCGYMKLLPMFLMVMP). Residues 332-375 (GMISRILFTEKVACTVPSECEKYCGTKVGCTNIAYPTLVVELMP) are Extracellular-facing. Residues 376–406 (NGLRGLMLSVMLASLMSSLTSIFNSASTLFT) traverse the membrane as a helical segment. Residues 407–422 (MDIYTKIRKKASEKEL) lie on the Cytoplasmic side of the membrane. The chain crosses the membrane as a helical span at residues 423 to 444 (MIAGRLFMLVLIGVSIAWVPIV). The Extracellular portion of the chain corresponds to 445 to 451 (QSAQSGQ). A helical membrane pass occupies residues 452 to 477 (LFDYIQSITSYLGPPIAAVFLLAIFC). Residue Q457 participates in D-glucose binding. At 478 to 481 (KRVN) the chain is on the cytoplasmic side. The chain crosses the membrane as a helical span at residues 482–504 (EPGAFWGLIIGFLIGVSRMITEF). Over 505–525 (AYGTGSCMEPSNCPTIICGVH) the chain is Extracellular. The chain crosses the membrane as a helical span at residues 526–547 (YLYFAIILFVITIIVILAISLF). Residues 548–644 (TKPIADVHLY…TSEKRLWRMV (97 aa)) are Cytoplasmic-facing. A helical transmembrane segment spans residues 645–662 (VNINGIILLAVAVFCHAY). The Extracellular portion of the chain corresponds to 663–664 (FA).

It belongs to the sodium:solute symporter (SSF) (TC 2.A.21) family. N-glycosylation is not necessary for the cotransporter function.

The protein localises to the apical cell membrane. The catalysed reaction is D-glucose(out) + 2 Na(+)(out) = D-glucose(in) + 2 Na(+)(in). It catalyses the reaction D-galactose(out) + 2 Na(+)(out) = D-galactose(in) + 2 Na(+)(in). Enhanced by the interaction with PDZK1IP1/MAP17; but unlike SLC5A2/SGLT2, PDZK1IP1 is not essential for SLC5A1 transporter activity. Possibly modulated by cholesterol binding. Electrogenic Na(+)-coupled sugar symporter that actively transports D-glucose or D-galactose at the plasma membrane, with a Na(+) to sugar coupling ratio of 2:1. Transporter activity is driven by a transmembrane Na(+) electrochemical gradient set by the Na(+)/K(+) pump. Has a primary role in the transport of dietary monosaccharides from enterocytes to blood. Responsible for the absorption of D-glucose or D-galactose across the apical brush-border membrane of enterocytes, whereas basolateral exit is provided by GLUT2. Additionally, functions as a D-glucose sensor in enteroendocrine cells, triggering the secretion of the incretins GCG and GIP that control food intake and energy homeostasis. Together with SGLT2, functions in reabsorption of D-glucose from glomerular filtrate, playing a nonredundant role in the S3 segment of the proximal tubules. Transports D-glucose into endometrial epithelial cells, controlling glycogen synthesis and nutritional support for the embryo as well as the decidual transformation of endometrium prior to conception. Acts as a water channel enabling passive water transport in response to the osmotic gradient created upon sugar and Na(+) uptake. Has high water conductivity comparable to aquaporins and therefore is expected to play an important role in transepithelial water permeability, especially in the small intestine. This is Sodium/glucose cotransporter 1 (SLC5A1) from Ovis aries (Sheep).